The sequence spans 202 residues: Methylthioribulose-1-phosphate dehydratase (202 aa).

Zn(2+) contacts are provided by H93 and H95.

This sequence belongs to the aldolase class II family. MtnB subfamily. It depends on Zn(2+) as a cofactor.

It carries out the reaction 5-(methylsulfanyl)-D-ribulose 1-phosphate = 5-methylsulfanyl-2,3-dioxopentyl phosphate + H2O. It participates in amino-acid biosynthesis; L-methionine biosynthesis via salvage pathway; L-methionine from S-methyl-5-thio-alpha-D-ribose 1-phosphate: step 2/6. In terms of biological role, catalyzes the dehydration of methylthioribulose-1-phosphate (MTRu-1-P) into 2,3-diketo-5-methylthiopentyl-1-phosphate (DK-MTP-1-P). This Klebsiella pneumoniae subsp. pneumoniae (strain ATCC 700721 / MGH 78578) protein is Methylthioribulose-1-phosphate dehydratase.